A 389-amino-acid chain; its full sequence is Chalcone synthase 3 (389 aa).

The active site involves C164.

The protein belongs to the thiolase-like superfamily. Chalcone/stilbene synthases family.

The catalysed reaction is (E)-4-coumaroyl-CoA + 3 malonyl-CoA + 3 H(+) = 2',4,4',6'-tetrahydroxychalcone + 3 CO2 + 4 CoA. Its pathway is secondary metabolite biosynthesis; flavonoid biosynthesis. In terms of biological role, the primary product of this enzyme is 4,2',4',6'-tetrahydroxychalcone (also termed naringenin-chalcone or chalcone) which can under specific conditions spontaneously isomerize into naringenin. The polypeptide is Chalcone synthase 3 (CHS3) (Pisum sativum (Garden pea)).